Here is a 138-residue protein sequence, read N- to C-terminus: Large ribosomal subunit protein uL16 (138 aa).

It belongs to the universal ribosomal protein uL16 family. As to quaternary structure, part of the 50S ribosomal subunit.

Binds 23S rRNA and is also seen to make contacts with the A and possibly P site tRNAs. This Rhodospirillum rubrum (strain ATCC 11170 / ATH 1.1.1 / DSM 467 / LMG 4362 / NCIMB 8255 / S1) protein is Large ribosomal subunit protein uL16.